Consider the following 252-residue polypeptide: Imidazole glycerol phosphate synthase subunit HisF (252 aa).

Catalysis depends on residues Asp11 and Asp130.

Belongs to the HisA/HisF family. Heterodimer of HisH and HisF.

The protein localises to the cytoplasm. It carries out the reaction 5-[(5-phospho-1-deoxy-D-ribulos-1-ylimino)methylamino]-1-(5-phospho-beta-D-ribosyl)imidazole-4-carboxamide + L-glutamine = D-erythro-1-(imidazol-4-yl)glycerol 3-phosphate + 5-amino-1-(5-phospho-beta-D-ribosyl)imidazole-4-carboxamide + L-glutamate + H(+). Its pathway is amino-acid biosynthesis; L-histidine biosynthesis; L-histidine from 5-phospho-alpha-D-ribose 1-diphosphate: step 5/9. Functionally, IGPS catalyzes the conversion of PRFAR and glutamine to IGP, AICAR and glutamate. The HisF subunit catalyzes the cyclization activity that produces IGP and AICAR from PRFAR using the ammonia provided by the HisH subunit. The polypeptide is Imidazole glycerol phosphate synthase subunit HisF (Bacillus cereus (strain ZK / E33L)).